We begin with the raw amino-acid sequence, 420 residues long: Gamma-glutamyl phosphate reductase (420 aa).

It belongs to the gamma-glutamyl phosphate reductase family.

The protein localises to the cytoplasm. The catalysed reaction is L-glutamate 5-semialdehyde + phosphate + NADP(+) = L-glutamyl 5-phosphate + NADPH + H(+). The protein operates within amino-acid biosynthesis; L-proline biosynthesis; L-glutamate 5-semialdehyde from L-glutamate: step 2/2. Catalyzes the NADPH-dependent reduction of L-glutamate 5-phosphate into L-glutamate 5-semialdehyde and phosphate. The product spontaneously undergoes cyclization to form 1-pyrroline-5-carboxylate. The polypeptide is Gamma-glutamyl phosphate reductase (Streptococcus pneumoniae (strain JJA)).